The sequence spans 89 residues: NAD(P)H-quinone oxidoreductase subunit L (89 aa).

2 consecutive transmembrane segments (helical) span residues 29–46 (VLGG…FYWM) and 59–79 (LFIY…APFL).

The protein belongs to the complex I NdhL subunit family. NDH-1 can be composed of about 15 different subunits; different subcomplexes with different compositions have been identified which probably have different functions.

It is found in the cellular thylakoid membrane. It carries out the reaction a plastoquinone + NADH + (n+1) H(+)(in) = a plastoquinol + NAD(+) + n H(+)(out). It catalyses the reaction a plastoquinone + NADPH + (n+1) H(+)(in) = a plastoquinol + NADP(+) + n H(+)(out). Functionally, NDH-1 shuttles electrons from an unknown electron donor, via FMN and iron-sulfur (Fe-S) centers, to quinones in the respiratory and/or the photosynthetic chain. The immediate electron acceptor for the enzyme in this species is believed to be plastoquinone. Couples the redox reaction to proton translocation, and thus conserves the redox energy in a proton gradient. Cyanobacterial NDH-1 also plays a role in inorganic carbon-concentration. The protein is NAD(P)H-quinone oxidoreductase subunit L of Prochlorococcus marinus (strain NATL1A).